The sequence spans 428 residues: Delta-aminolevulinic acid dehydratase, chloroplastic (428 aa).

The Schiff-base intermediate with substrate role is filled by Lys294. 5-aminolevulinate contacts are provided by Arg304 and Lys316. Mg(2+) is bound at residue Glu332. The active-site Schiff-base intermediate with substrate is the Lys347. 2 residues coordinate 5-aminolevulinate: Ser373 and Tyr412.

Belongs to the ALAD family. Homooctamer. Mg(2+) is required as a cofactor.

The protein localises to the plastid. It is found in the chloroplast. The catalysed reaction is 2 5-aminolevulinate = porphobilinogen + 2 H2O + H(+). Its pathway is porphyrin-containing compound metabolism; protoporphyrin-IX biosynthesis; coproporphyrinogen-III from 5-aminolevulinate: step 1/4. In terms of biological role, catalyzes an early step in the biosynthesis of tetrapyrroles. Binds two molecules of 5-aminolevulinate per subunit, each at a distinct site, and catalyzes their condensation to form porphobilinogen. The protein is Delta-aminolevulinic acid dehydratase, chloroplastic (HEMB) of Hordeum vulgare (Barley).